Here is a 343-residue protein sequence, read N- to C-terminus: Thiamine-phosphate synthase (343 aa).

The segment at 1 to 123 (MQQASPTAIA…GACCKQLRYR (123 aa)) is unknown. The tract at residues 124–343 (VYALESGLLG…LLTQLSRINP (220 aa)) is thiamine-phosphate synthase. 4-amino-2-methyl-5-(diphosphooxymethyl)pyrimidine is bound by residues 171 to 175 (QYRDK) and asparagine 203. The Mg(2+) site is built by aspartate 204 and aspartate 223. Serine 242 serves as a coordination point for 4-amino-2-methyl-5-(diphosphooxymethyl)pyrimidine. 268–270 (TPT) contributes to the 2-[(2R,5Z)-2-carboxy-4-methylthiazol-5(2H)-ylidene]ethyl phosphate binding site. Lysine 271 serves as a coordination point for 4-amino-2-methyl-5-(diphosphooxymethyl)pyrimidine. Glycine 298 contributes to the 2-[(2R,5Z)-2-carboxy-4-methylthiazol-5(2H)-ylidene]ethyl phosphate binding site.

This sequence belongs to the thiamine-phosphate synthase family. The cofactor is Mg(2+).

It carries out the reaction 2-[(2R,5Z)-2-carboxy-4-methylthiazol-5(2H)-ylidene]ethyl phosphate + 4-amino-2-methyl-5-(diphosphooxymethyl)pyrimidine + 2 H(+) = thiamine phosphate + CO2 + diphosphate. The catalysed reaction is 2-(2-carboxy-4-methylthiazol-5-yl)ethyl phosphate + 4-amino-2-methyl-5-(diphosphooxymethyl)pyrimidine + 2 H(+) = thiamine phosphate + CO2 + diphosphate. The enzyme catalyses 4-methyl-5-(2-phosphooxyethyl)-thiazole + 4-amino-2-methyl-5-(diphosphooxymethyl)pyrimidine + H(+) = thiamine phosphate + diphosphate. It participates in cofactor biosynthesis; thiamine diphosphate biosynthesis; thiamine phosphate from 4-amino-2-methyl-5-diphosphomethylpyrimidine and 4-methyl-5-(2-phosphoethyl)-thiazole: step 1/1. In terms of biological role, condenses 4-methyl-5-(beta-hydroxyethyl)thiazole monophosphate (THZ-P) and 2-methyl-4-amino-5-hydroxymethyl pyrimidine pyrophosphate (HMP-PP) to form thiamine monophosphate (TMP). In Synechocystis sp. (strain ATCC 27184 / PCC 6803 / Kazusa), this protein is Thiamine-phosphate synthase.